Consider the following 377-residue polypeptide: Pseudouridylate synthase RPUSD4, mitochondrial (377 aa).

The transit peptide at 1-15 (MAAPRWSASGPWIRG) directs the protein to the mitochondrion. Positions 36–62 (AASTAINAQRLAEKLRAQKREQDTKKE) form a coiled coil. The active site involves aspartate 153.

Belongs to the pseudouridine synthase RluA family. As to quaternary structure, interacts with 16S mt-rRNA, mt-tRNA(Phe) and mt-tRNA(Met). Forms a regulatory protein-RNA complex, consisting of RCC1L, NGRN, RPUSD3, RPUSD4, TRUB2, FASTKD2 and 16S mt-rRNA.

The protein resides in the mitochondrion matrix. The protein localises to the nucleus. It localises to the cytoplasm. The catalysed reaction is uridine in 5S rRNA = pseudouridine in 5S rRNA. It carries out the reaction a uridine in tRNA = a pseudouridine in tRNA. It catalyses the reaction a uridine in mRNA = a pseudouridine in mRNA. Its function is as follows. Catalyzes uridine to pseudouridine isomerization (pseudouridylation) of different mitochondrial RNA substrates. Acts on position 1397 in 16S mitochondrial ribosomal RNA (16S mt-rRNA). This modification is required for the assembly of 16S mt-rRNA into a functional mitochondrial ribosome. As a component of a functional protein-RNA module, consisting of RCC1L, NGRN, RPUSD3, RPUSD4, TRUB2, FASTKD2 and 16S mt-rRNA, controls 16S mt-rRNA abundance and is required for intra-mitochondrial translation. Acts on position 39 in mitochondrial tRNA(Phe). Also catalyzes pseudouridylation of mRNAs in nucleus: acts as a regulator of pre-mRNA splicing by mediating pseudouridylation of pre-mRNAs at locations associated with alternatively spliced regions. Pseudouridylation of pre-mRNAs near splice sites directly regulates mRNA splicing and mRNA 3'-end processing. This chain is Pseudouridylate synthase RPUSD4, mitochondrial, found in Homo sapiens (Human).